A 430-amino-acid chain; its full sequence is Adenylosuccinate synthetase (430 aa).

GTP is bound by residues 13-19 (GDEGKGK) and 41-43 (GHT). D14 serves as the catalytic Proton acceptor. Mg(2+) is bound by residues D14 and G41. IMP contacts are provided by residues 14–17 (DEGK), 39–42 (NAGH), T130, R144, Q225, T240, and R304. H42 acts as the Proton donor in catalysis. Substrate is bound at residue 300 to 306 (ATTGRAR). Residues R306, 332–334 (KLD), and 414–416 (STG) each bind GTP.

The protein belongs to the adenylosuccinate synthetase family. In terms of assembly, homodimer. Requires Mg(2+) as cofactor.

The protein resides in the cytoplasm. It catalyses the reaction IMP + L-aspartate + GTP = N(6)-(1,2-dicarboxyethyl)-AMP + GDP + phosphate + 2 H(+). It participates in purine metabolism; AMP biosynthesis via de novo pathway; AMP from IMP: step 1/2. Functionally, plays an important role in the de novo pathway of purine nucleotide biosynthesis. Catalyzes the first committed step in the biosynthesis of AMP from IMP. This Pseudomonas syringae pv. tomato (strain ATCC BAA-871 / DC3000) protein is Adenylosuccinate synthetase.